Reading from the N-terminus, the 389-residue chain is MARFFPLTLTILLFFIQRIDFCHTLVPANETFKFVNEGELGQYISEYFGDYRPLDPFTSPFQLCFYNQTPTAFTLALRMGLRRTESLMRWVWEANRGNPVDENATLTFGPDGNLVLARSNGQVAWQTSTANKGVVGLKILPNGNMVLYDSKGKFLWQSFDTPTDTLLVGQSLKMGAVTKLVSRASPGENVNGPYSLVMEPKGLHLYYKPTTSPKPIRYYSFSLFTKLNKNESLQNVTFEFENENDQGFAFLLSLKYGTSNSLGGASILNRIKYNTTLSFLRLEIDGNVKIYTYNDKVDYGAWEVTYTLFLKAPPPLFQVSLAATESESSECQLPKKCGNFGLCEESQCVGCPTSSGPVLAWSKTCEPPKLSSCGPKDFHYNKLGGWITT.

The N-terminal stretch at 1–24 (MARFFPLTLTILLFFIQRIDFCHT) is a signal peptide. N-linked (GlcNAc...) (complex) asparagine glycosylation is present at Asn29. The region spanning 88–193 (MRWVWEANRG…ASPGENVNGP (106 aa)) is the Bulb-type lectin domain. Residues Asn103, Asn230, and Asn235 are each glycosylated (N-linked (GlcNAc...) asparagine). Asn274 carries an N-linked (GlcNAc...) (high mannose) asparagine glycan.

In 14-day old seedlings, expressed in the epidermis and apical dome of the shoot and in the hypocotyl, cotyledon and epidermis of the root. In developing seeds, expressed in both the inner and outer epidermis of the integument.

It localises to the secreted. Its function is as follows. May be involved in the limitation of water flow through the outer epidermal cell wall, either by direct modification of wall structure or as a signal instructing the protoplast to restrict water transport across the cell wall. This is Epidermis-specific secreted glycoprotein EP1 (EP1) from Daucus carota (Wild carrot).